The primary structure comprises 90 residues: MAANNQGEIRYLTPLSVDTKKKKYCRFKKSGIRYIDYKDPEFLKKFLNEQGKILPRRITGTSLKFQRRVAQAVKRARHLALLPYVTDMMK.

This sequence belongs to the bacterial ribosomal protein bS18 family. Part of the 30S ribosomal subunit. Forms a tight heterodimer with protein bS6.

Functionally, binds as a heterodimer with protein bS6 to the central domain of the 16S rRNA, where it helps stabilize the platform of the 30S subunit. This chain is Small ribosomal subunit protein bS18, found in Porphyromonas gingivalis (strain ATCC 33277 / DSM 20709 / CIP 103683 / JCM 12257 / NCTC 11834 / 2561).